Reading from the N-terminus, the 456-residue chain is MPYIPHTPDDTKEMLEAIGAQDIQDLFDEIPASLQYAGFQNIPAGINEMEMLKEAQNQAQKNRNGICFIGAGCYEHHIPAAVWDIASRGEFLTAYTPYQAEASQGTLQLLYEYQTMICELTGMEVSNASMYDGATALAEAVLMAVRLNKHSKTNRVLIAGTVHPFYRETIETIVRNQHIEVITLPFDEQQGITNLGSLNQYTGEDITALVIAQPNFFGCLEQVDKMTSWAHHNKTISVACVNPTSLALLKPPGSWGEHGVDIVCGEGQPLGSPMASGGPYFGFLSTRMAHVRQMPGRIIGRTVDKDGKTGFSLTLQAREQHIRRAKATSNICTNQGLLVTAATIYMSLLGPEGLSQVATQCHQNTHELITALTQIEGVELAFKAPFFHEALIKLNQPVQSVLQQLADAGIAGGYAPEQHYPQLANTLLVCATEVRTAEDIAKYAKTLKTIMSKRGA.

The protein belongs to the GcvP family. N-terminal subunit subfamily. As to quaternary structure, the glycine cleavage system is composed of four proteins: P, T, L and H. In this organism, the P 'protein' is a heterodimer of two subunits.

The catalysed reaction is N(6)-[(R)-lipoyl]-L-lysyl-[glycine-cleavage complex H protein] + glycine + H(+) = N(6)-[(R)-S(8)-aminomethyldihydrolipoyl]-L-lysyl-[glycine-cleavage complex H protein] + CO2. Its function is as follows. The glycine cleavage system catalyzes the degradation of glycine. The P protein binds the alpha-amino group of glycine through its pyridoxal phosphate cofactor; CO(2) is released and the remaining methylamine moiety is then transferred to the lipoamide cofactor of the H protein. This is Probable glycine dehydrogenase (decarboxylating) subunit 1 from Legionella pneumophila subsp. pneumophila (strain Philadelphia 1 / ATCC 33152 / DSM 7513).